We begin with the raw amino-acid sequence, 191 residues long: MIGSITGNVEEIRDSYIILNVGNIGYIIYVSHKVLQTCKVGDNIKLYIETYVNRDNITQLYGFLNRQEQDYLKMLVTINGINYKTALSILSKLSPEQIFSAVVNNDKIAFKGNGIGEKLAGRIITELQYKINKMPIEETFSIIENDDSLAALISLGYEKLKAFNVIQEIKSKTPDASTQEVIRKALQKLSQ.

The domain I stretch occupies residues 1–64; sequence MIGSITGNVE…DNITQLYGFL (64 aa). Positions 65 to 142 are domain II; it reads NRQEQDYLKM…KMPIEETFSI (78 aa). The interval 143–146 is flexible linker; that stretch reads IEND. Residues 146–191 form a domain III region; the sequence is DDSLAALISLGYEKLKAFNVIQEIKSKTPDASTQEVIRKALQKLSQ.

Belongs to the RuvA family. Homotetramer. Forms an RuvA(8)-RuvB(12)-Holliday junction (HJ) complex. HJ DNA is sandwiched between 2 RuvA tetramers; dsDNA enters through RuvA and exits via RuvB. An RuvB hexamer assembles on each DNA strand where it exits the tetramer. Each RuvB hexamer is contacted by two RuvA subunits (via domain III) on 2 adjacent RuvB subunits; this complex drives branch migration. In the full resolvosome a probable DNA-RuvA(4)-RuvB(12)-RuvC(2) complex forms which resolves the HJ.

It is found in the cytoplasm. Functionally, the RuvA-RuvB-RuvC complex processes Holliday junction (HJ) DNA during genetic recombination and DNA repair, while the RuvA-RuvB complex plays an important role in the rescue of blocked DNA replication forks via replication fork reversal (RFR). RuvA specifically binds to HJ cruciform DNA, conferring on it an open structure. The RuvB hexamer acts as an ATP-dependent pump, pulling dsDNA into and through the RuvAB complex. HJ branch migration allows RuvC to scan DNA until it finds its consensus sequence, where it cleaves and resolves the cruciform DNA. The polypeptide is Holliday junction branch migration complex subunit RuvA (Ehrlichia ruminantium (strain Welgevonden)).